The primary structure comprises 154 residues: Protein MoxZ (154 aa).

The polypeptide is Protein MoxZ (moxZ) (Paracoccus denitrificans).